A 1081-amino-acid polypeptide reads, in one-letter code: Cellulose synthase A catalytic subunit 1 [UDP-forming] (1081 aa).

Met1 bears the N-acetylmethionine mark. The Cytoplasmic portion of the chain corresponds to 1-270 (MEASAGLVAG…SRVVPIPSSR (270 aa)). Zn(2+) is bound by residues Cys39, Cys42, Cys58, Cys61, Cys66, Cys69, Cys81, and Cys84. The RING-type; degenerate zinc-finger motif lies at 39-85 (CQICGDDVGLAETGDVFVACNECAFPVCRPCYEYERKDGTQCCPQCK). Positions 118–195 (GANKARHQRH…RQPVPVRIVD (78 aa)) are disordered. Residues 127 to 139 (HGEEFSSSSRHES) show a composition bias toward basic and acidic residues. Positions 158-168 (PDTQSVRTTSG) are enriched in polar residues. The chain crosses the membrane as a helical span at residues 271–291 (LTPYRVVIILRLIILCFFLQY). At 292–299 (RTTHPVKN) the chain is on the extracellular side. Residues 300–320 (AYPLWLTSVICEIWFAFSWLL) traverse the membrane as a helical segment. The Cytoplasmic portion of the chain corresponds to 321 to 856 (DQFPKWYPIN…LLERIAYINT (536 aa)). Positions 359, 365, 366, and 395 each coordinate UDP-alpha-D-glucose. Asp395 is a catalytic residue. Residues 449 to 476 (VKERRAMKREYEEFKVRINALVAKAQKI) adopt a coiled-coil conformation. Lys536 lines the UDP-alpha-D-glucose pocket. Mn(2+)-binding residues include Lys537 and Asp561. Asp780 is a catalytic residue. The chain crosses the membrane as a helical span at residues 857–877 (IVYPITSIPLIAYCILPAFCL). Over 878–889 (ITDRFIIPEISN) the chain is Extracellular. The chain crosses the membrane as a helical span at residues 890–910 (YASIWFILLFISIAVTGILEL). At 911-925 (RWSGVSIEDWWRNEQ) the chain is on the cytoplasmic side. The helical transmembrane segment at 926-946 (FWVIGGTSAHLFAVFQGLLKV) threads the bilayer. Residues 947–976 (LAGIDTNFTVTSKATDEDGDFAELYIFKWT) are Extracellular-facing. Asn953 carries N-linked (GlcNAc...) asparagine glycosylation. The chain crosses the membrane as a helical span at residues 977–997 (ALLIPPTTVLLVNLIGIVAGV). Over 998–1008 (SYAVNSGYQSW) the chain is Cytoplasmic. A helical transmembrane segment spans residues 1009–1029 (GPLFGKLFFALWVIAHLYPFL). The Extracellular segment spans residues 1030 to 1038 (KGLLGRQNR). A helical membrane pass occupies residues 1039–1059 (TPTIVIVWSVLLASIFSLLWV). At 1060-1081 (RINPFVDANPNANNFNGKGGVF) the chain is on the cytoplasmic side.

Belongs to the glycosyltransferase 2 family. Plant cellulose synthase subfamily. In terms of assembly, interacts with CESA3 and CESA6. Assembly with CESA3 and CESA6 is required for functional complex in primary cell wall cellulose synthesis. Interacts with STL1 and STL2, but not with GOT1. Binds to CSI1. Interacts with PAT24/TIP1. The cofactor is Zn(2+). Mn(2+) is required as a cofactor. In terms of processing, S-acylated. In terms of tissue distribution, expressed in germinating seeds, seedlings, roots, stems, shoots leaves and flowers, but not in mature flowers.

It is found in the cell membrane. It carries out the reaction [(1-&gt;4)-beta-D-glucosyl](n) + UDP-alpha-D-glucose = [(1-&gt;4)-beta-D-glucosyl](n+1) + UDP + H(+). It functions in the pathway glycan metabolism; plant cellulose biosynthesis. In terms of biological role, catalytic subunit of cellulose synthase terminal complexes ('rosettes'), required for beta-1,4-glucan microfibril crystallization, a major mechanism of the cell wall formation. Involved in the primary cell wall formation. Required during embryogenesis for cell elongation, orientation of cell expansion and complex cell wall formations, such as interdigitated pattern of epidermal pavement cells, stomatal guard cells and trichomes. Plays a role in lateral roots formation, but seems not necessary for the development of tip-growing cells such as root hairs. The presence of each protein CESA1 and CESA6 is critical for cell expansion after germination. The chain is Cellulose synthase A catalytic subunit 1 [UDP-forming] from Arabidopsis thaliana (Mouse-ear cress).